Reading from the N-terminus, the 242-residue chain is 3-dehydroquinate dehydratase (242 aa).

3-dehydroquinate-binding positions include 39 to 41 (EVR) and arginine 73. The active-site Proton donor/acceptor is histidine 135. Lysine 162 functions as the Schiff-base intermediate with substrate in the catalytic mechanism. Residues arginine 203 and glutamine 228 each contribute to the 3-dehydroquinate site.

This sequence belongs to the type-I 3-dehydroquinase family. Homodimer.

The enzyme catalyses 3-dehydroquinate = 3-dehydroshikimate + H2O. It participates in metabolic intermediate biosynthesis; chorismate biosynthesis; chorismate from D-erythrose 4-phosphate and phosphoenolpyruvate: step 3/7. In terms of biological role, involved in the third step of the chorismate pathway, which leads to the biosynthesis of aromatic amino acids. Catalyzes the cis-dehydration of 3-dehydroquinate (DHQ) and introduces the first double bond of the aromatic ring to yield 3-dehydroshikimate. In Methanosarcina acetivorans (strain ATCC 35395 / DSM 2834 / JCM 12185 / C2A), this protein is 3-dehydroquinate dehydratase.